The primary structure comprises 954 residues: E3 ubiquitin-protein ligase MIB2 (954 aa).

An MIB/HERC2 1 domain is found at 1–80; it reads MDLDPYASMQ…AYDLLLYDNA (80 aa). The segment at 86-138 adopts a ZZ-type zinc-finger fold; that stretch reads HPNIICDCCKKHGIRGMRWKCKMCFDYDLCTQCYMNNKHDLSHAFERYETAHS. Zn(2+)-binding residues include C91, C94, C106, C109, C115, C118, H124, and H128. Residues 149–227 enclose the MIB/HERC2 2 domain; the sequence is LTRITLKGTF…KVDLKCTVEA (79 aa). 9 ANK repeats span residues 464 to 493, 497 to 526, 530 to 559, 563 to 591, 597 to 626, 631 to 661, 665 to 694, 698 to 726, and 766 to 795; these read QGRTALQIASYQGHLDVVKILLQAHATVNL, EGDTALHYAAFGNQADVARVLMAKGAGADL, AKCTALYVAVSQGFTEVVQALCELNCDVNL, HGDTPLHYAITADYKVIIEILTEVPNIDF, QGFNLLHYSALKGNKLAIKKILARARQLVD, DGFTALHLAALNNHKEVAEILIKEGRCDVNV, RNQTPLHLAIIQGHVGLVQLLVSEGSDVNA, DGDTAMHIALERQQLMSVLMEKREGEMGS, and RGKSPLDLITDGRIVQIIKDFSQKFREQQV. RING-type zinc fingers lie at residues 830–865 and 910–943; these read CLVCSELALLIHFFPCQHSIVCEECSRRMKKCIKCQ and CPICIDDQIKLVFQCGHGSCPDCSTALTVCPICR.

It is found in the cytoplasm. It carries out the reaction S-ubiquitinyl-[E2 ubiquitin-conjugating enzyme]-L-cysteine + [acceptor protein]-L-lysine = [E2 ubiquitin-conjugating enzyme]-L-cysteine + N(6)-ubiquitinyl-[acceptor protein]-L-lysine.. Its pathway is protein modification; protein ubiquitination. E3 ubiquitin-protein ligase that mediates ubiquitination of Delta receptors, which act as ligands of Notch proteins. Positively regulates the Delta-mediated Notch signaling by ubiquitinating the intracellular domain of Delta, leading to endocytosis of Delta receptors. In Gallus gallus (Chicken), this protein is E3 ubiquitin-protein ligase MIB2 (MIB2).